The primary structure comprises 415 residues: Histidine--tRNA ligase (415 aa).

Belongs to the class-II aminoacyl-tRNA synthetase family. Homodimer.

It is found in the cytoplasm. It carries out the reaction tRNA(His) + L-histidine + ATP = L-histidyl-tRNA(His) + AMP + diphosphate + H(+). This chain is Histidine--tRNA ligase, found in Gluconobacter oxydans (strain 621H) (Gluconobacter suboxydans).